The primary structure comprises 450 residues: Probable ECA polymerase (450 aa).

A run of 11 helical transmembrane segments spans residues 6–26, 37–57, 63–83, 118–138, 155–175, 181–201, 207–227, 228–248, 341–361, 378–398, and 410–430; these read FSGL…LTWF, VFFS…TSVL, VGVA…CFYA, VILM…NGFL, GVAL…VYFL, AWLF…MIVG, IIIA…ISLW, MLAA…LKRY, LVVM…GLII, YKAA…IVLA, and VFFI…YWLF.

The protein belongs to the WzyE family. Probably part of a complex composed of WzxE, WzyE and WzzE.

It is found in the cell inner membrane. Its pathway is bacterial outer membrane biogenesis; enterobacterial common antigen biosynthesis. Functionally, probably involved in the polymerization of enterobacterial common antigen (ECA) trisaccharide repeat units. This is Probable ECA polymerase from Escherichia coli O7:K1 (strain IAI39 / ExPEC).